Consider the following 239-residue polypeptide: DNA repair protein RecO (239 aa).

This sequence belongs to the RecO family.

Its function is as follows. Involved in DNA repair and RecF pathway recombination. In Stenotrophomonas maltophilia (strain K279a), this protein is DNA repair protein RecO.